Reading from the N-terminus, the 284-residue chain is uncharacterized protein (284 aa).

A run of 3 helical transmembrane segments spans residues 174–194 (LFVLIVMFTTVHRVQCIYISI), 217–237 (MLIPGPGVAHTYIYVAGPGTA), and 241–261 (LIVLLLLLLCIVVAVNTSGSC).

The protein resides in the membrane. This is an uncharacterized protein from Saccharomyces cerevisiae (strain ATCC 204508 / S288c) (Baker's yeast).